The following is a 121-amino-acid chain: Large ribosomal subunit protein uL18c (121 aa).

It belongs to the universal ribosomal protein uL18 family. As to quaternary structure, part of the 50S ribosomal subunit; contacts the 5S rRNA.

The protein localises to the plastid. The protein resides in the cyanelle. Functionally, binds 5S rRNA, forms part of the central protuberance of the 50S subunit. The sequence is that of Large ribosomal subunit protein uL18c (rpl18) from Cyanophora paradoxa.